A 429-amino-acid polypeptide reads, in one-letter code: Enolase (429 aa).

Glutamine 162 serves as a coordination point for (2R)-2-phosphoglycerate. The active-site Proton donor is the glutamate 204. Mg(2+) is bound by residues aspartate 241, glutamate 283, and aspartate 310. Residues lysine 335, arginine 364, serine 365, and lysine 386 each contribute to the (2R)-2-phosphoglycerate site. Lysine 335 acts as the Proton acceptor in catalysis.

It belongs to the enolase family. Requires Mg(2+) as cofactor.

Its subcellular location is the cytoplasm. It localises to the secreted. The protein resides in the cell surface. The catalysed reaction is (2R)-2-phosphoglycerate = phosphoenolpyruvate + H2O. It functions in the pathway carbohydrate degradation; glycolysis; pyruvate from D-glyceraldehyde 3-phosphate: step 4/5. Functionally, catalyzes the reversible conversion of 2-phosphoglycerate (2-PG) into phosphoenolpyruvate (PEP). It is essential for the degradation of carbohydrates via glycolysis. This chain is Enolase, found in Mycobacterium avium (strain 104).